Consider the following 500-residue polypeptide: MSIFLCFLLLLPLSLILFKKLLPSKGKLPPGPIGLPIIGNLHQLGKLLYKSFHKISQEYGPVVLLRLGVVPVIVVSSKEGAEEVLKTHDLETCTRPKTAATGLFTYNFKDIGFAPFGDDWREMRKITTLELFSVKKLKSFRYIREEESELLVKKISKSVDETQNSSVDLRKVLFSFTASIICRLAFGQNFHQCDFVDMEKVEELVLESEANLGTFAFADFFPGGWLIDRISGQHSRVNKAFYKLTNFYKHVIDDHLKTGQPQDHSDIVSVMLDMINKPTKADSFKVTYDHLKGVMSDIFLAGVNGGANTMIWTLTELSRHPRVMKKLQEEIRAMLGPNKERITEEDLEKVEYLKLVMVETFRLHPPAPLLLPRLTMSDIKIQGYNIPKNTMIQINTYAIGRDPKYWKQPGEFIPERFLDSPIDYKGQHFELLPFGAGRRICPGMATGITMVELGLLNLLYFFDWSLPNGMTIEDIDMEEDEGFAIAKKVPLVLIQTSHRW.

A helical transmembrane segment spans residues 3-23; the sequence is IFLCFLLLLPLSLILFKKLLP. Position 441 (Cys-441) interacts with heme.

Belongs to the cytochrome P450 family. Heme serves as cofactor.

The protein localises to the membrane. This is Cytochrome P450 71B38 (CYP71B38) from Arabidopsis thaliana (Mouse-ear cress).